A 45-amino-acid chain; its full sequence is Large ribosomal subunit protein bL34 (45 aa).

The protein belongs to the bacterial ribosomal protein bL34 family.

The sequence is that of Large ribosomal subunit protein bL34 from Paenarthrobacter aurescens (strain TC1).